Consider the following 304-residue polypeptide: Homoserine kinase (304 aa).

Residue 90–100 participates in ATP binding; it reads PLARGLGSSAS.

The protein belongs to the GHMP kinase family. Homoserine kinase subfamily.

The protein resides in the cytoplasm. The catalysed reaction is L-homoserine + ATP = O-phospho-L-homoserine + ADP + H(+). It participates in amino-acid biosynthesis; L-threonine biosynthesis; L-threonine from L-aspartate: step 4/5. Functionally, catalyzes the ATP-dependent phosphorylation of L-homoserine to L-homoserine phosphate. In Staphylococcus aureus (strain JH9), this protein is Homoserine kinase.